Reading from the N-terminus, the 248-residue chain is UPF0246 protein A1I_02510 (248 aa).

The protein belongs to the UPF0246 family.

This chain is UPF0246 protein A1I_02510, found in Rickettsia bellii (strain OSU 85-389).